The sequence spans 405 residues: Phosphoglycerate kinase (405 aa).

Substrate contacts are provided by residues D21–N23, R36, H59–R62, R119, and R161. ATP contacts are provided by residues K212, G301, E332, and G361–S364.

Belongs to the phosphoglycerate kinase family. Monomer.

Its subcellular location is the cytoplasm. The enzyme catalyses (2R)-3-phosphoglycerate + ATP = (2R)-3-phospho-glyceroyl phosphate + ADP. The protein operates within carbohydrate degradation; glycolysis; pyruvate from D-glyceraldehyde 3-phosphate: step 2/5. The protein is Phosphoglycerate kinase of Leuconostoc citreum (strain KM20).